Here is a 359-residue protein sequence, read N- to C-terminus: Fructose-bisphosphate aldolase class 2 (359 aa).

Serine 62 provides a ligand contact to D-glyceraldehyde 3-phosphate. The active-site Proton donor is the aspartate 110. Residues histidine 111, aspartate 145, glutamate 175, and histidine 227 each coordinate Zn(2+). Glycine 228 contributes to the dihydroxyacetone phosphate binding site. Histidine 265 contributes to the Zn(2+) binding site. Residues 266 to 268 (GGS) and 287 to 290 (NIDT) each bind dihydroxyacetone phosphate.

Belongs to the class II fructose-bisphosphate aldolase family. Requires Zn(2+) as cofactor.

The enzyme catalyses beta-D-fructose 1,6-bisphosphate = D-glyceraldehyde 3-phosphate + dihydroxyacetone phosphate. Its pathway is carbohydrate degradation; glycolysis; D-glyceraldehyde 3-phosphate and glycerone phosphate from D-glucose: step 4/4. Its function is as follows. Catalyzes the aldol condensation of dihydroxyacetone phosphate (DHAP or glycerone-phosphate) with glyceraldehyde 3-phosphate (G3P) to form fructose 1,6-bisphosphate (FBP) in gluconeogenesis and the reverse reaction in glycolysis. The sequence is that of Fructose-bisphosphate aldolase class 2 (fbaA) from Buchnera aphidicola subsp. Baizongia pistaciae (strain Bp).